A 254-amino-acid polypeptide reads, in one-letter code: 4-hydroxy-tetrahydrodipicolinate reductase (254 aa).

NAD(+)-binding positions include 8–13, Asp-35, 86–88, and 110–113; these read GCSGKM, CST, and SANM. Residue His-143 is the Proton donor/acceptor of the active site. His-144 is a (S)-2,3,4,5-tetrahydrodipicolinate binding site. Residue Lys-147 is the Proton donor of the active site. 153-154 lines the (S)-2,3,4,5-tetrahydrodipicolinate pocket; it reads GT.

This sequence belongs to the DapB family.

It is found in the cytoplasm. The catalysed reaction is (S)-2,3,4,5-tetrahydrodipicolinate + NAD(+) + H2O = (2S,4S)-4-hydroxy-2,3,4,5-tetrahydrodipicolinate + NADH + H(+). It carries out the reaction (S)-2,3,4,5-tetrahydrodipicolinate + NADP(+) + H2O = (2S,4S)-4-hydroxy-2,3,4,5-tetrahydrodipicolinate + NADPH + H(+). It participates in amino-acid biosynthesis; L-lysine biosynthesis via DAP pathway; (S)-tetrahydrodipicolinate from L-aspartate: step 4/4. Functionally, catalyzes the conversion of 4-hydroxy-tetrahydrodipicolinate (HTPA) to tetrahydrodipicolinate. The chain is 4-hydroxy-tetrahydrodipicolinate reductase from Clostridium perfringens (strain ATCC 13124 / DSM 756 / JCM 1290 / NCIMB 6125 / NCTC 8237 / Type A).